The chain runs to 113 residues: EVKLEESGGGLVQPGGSMKLSCVASGFTFSNYWMNWVRQSPEKGLEWVAEIRLKSHNYATHYAESVKGRFTISRDDSKSSVYLQMNNLRAEDTAIYYCSTGFAYWGQGTLVTV.

The Ig-like domain maps to 1-113 (EVKLEESGGG…YWGQGTLVTV (113 aa)). A disulfide bridge connects residues cysteine 22 and cysteine 98.

The polypeptide is Ig heavy chain V-III region ABE-47N (Mus musculus (Mouse)).